The primary structure comprises 109 residues: Putative ankyrin repeat protein L482 (109 aa).

4 ANK repeats span residues tyrosine 1 to threonine 26, asparagine 27 to serine 56, glutamate 57 to serine 86, and asparagine 88 to alanine 109.

The polypeptide is Putative ankyrin repeat protein L482 (Acanthamoeba polyphaga (Amoeba)).